Reading from the N-terminus, the 150-residue chain is MKKIFIYPPNSLILTDLVERFGHKPLNLNIVIGKLVRNPEIDSPPMNITDEEPKKGLKYAAVEVPSGVRGRMALIGPLIEEAEAAIIMDDAPIAFGCIGCQRTNELTLYLVRRKNIPILRVKYPTNEEEAEILVNKIANFLKSLEENQEN.

This is an uncharacterized protein from Methanocaldococcus jannaschii (strain ATCC 43067 / DSM 2661 / JAL-1 / JCM 10045 / NBRC 100440) (Methanococcus jannaschii).